An 861-amino-acid polypeptide reads, in one-letter code: DNA mismatch repair protein MutS (861 aa).

618 to 625 (GPNMGGKS) contacts ATP.

Belongs to the DNA mismatch repair MutS family.

This protein is involved in the repair of mismatches in DNA. It is possible that it carries out the mismatch recognition step. This protein has a weak ATPase activity. The chain is DNA mismatch repair protein MutS from Shewanella frigidimarina (strain NCIMB 400).